The sequence spans 254 residues: Sugar fermentation stimulation protein homolog (254 aa).

It belongs to the SfsA family.

The sequence is that of Sugar fermentation stimulation protein homolog from Synechococcus sp. (strain CC9605).